The chain runs to 490 residues: Betaine aldehyde dehydrogenase (490 aa).

Positions 26, 27, and 93 each coordinate K(+). 150 to 152 (GAW) is a binding site for NAD(+). Residue Lys162 is the Charge relay system of the active site. 176–179 (KPSE) provides a ligand contact to NAD(+). Position 180 (Val180) interacts with K(+). 230–233 (GVAS) provides a ligand contact to NAD(+). A K(+)-binding site is contributed by Leu246. Catalysis depends on Glu252, which acts as the Proton acceptor. Residues Gly254, Cys286, and Glu387 each coordinate NAD(+). Cys286 (nucleophile) is an active-site residue. A Cysteine sulfenic acid (-SOH) modification is found at Cys286. The K(+) site is built by Lys457 and Gly460. The active-site Charge relay system is Glu464.

The protein belongs to the aldehyde dehydrogenase family. As to quaternary structure, dimer of dimers. It depends on K(+) as a cofactor.

It carries out the reaction betaine aldehyde + NAD(+) + H2O = glycine betaine + NADH + 2 H(+). It functions in the pathway amine and polyamine biosynthesis; betaine biosynthesis via choline pathway; betaine from betaine aldehyde: step 1/1. Its function is as follows. Involved in the biosynthesis of the osmoprotectant glycine betaine. Catalyzes the irreversible oxidation of betaine aldehyde to the corresponding acid. This is Betaine aldehyde dehydrogenase from Escherichia coli (strain SE11).